Consider the following 89-residue polypeptide: Small ribosomal subunit protein uS15 (89 aa).

Belongs to the universal ribosomal protein uS15 family. Part of the 30S ribosomal subunit. Forms a bridge to the 50S subunit in the 70S ribosome, contacting the 23S rRNA.

In terms of biological role, one of the primary rRNA binding proteins, it binds directly to 16S rRNA where it helps nucleate assembly of the platform of the 30S subunit by binding and bridging several RNA helices of the 16S rRNA. Forms an intersubunit bridge (bridge B4) with the 23S rRNA of the 50S subunit in the ribosome. In Lactobacillus delbrueckii subsp. bulgaricus (strain ATCC 11842 / DSM 20081 / BCRC 10696 / JCM 1002 / NBRC 13953 / NCIMB 11778 / NCTC 12712 / WDCM 00102 / Lb 14), this protein is Small ribosomal subunit protein uS15.